A 645-amino-acid polypeptide reads, in one-letter code: MNKQQKEFKSFYSIRKSSLGVASVAISTLLLLMSNGEAQAAAEETGGTNTEAQPKTEAVASPTTTSEKAPETKPVANAVSVSNKEVEAPTSETKEAKEVKEVKAPKETKAVKPAAKATNNTYPILNQELREAIKNPAIKDKDHSAPNSRPIDFEMKKENGEQQFYHYASSVKPARVIFTDSKPEIELGLQSGQFWRKFEVYEGDKKLPIKLVSYDTVKDYAYIRFSVSNGTKAVKIVSSTHFNNKEEKYDYTLMEFAQPIYNSADKFKTEEDYKAEKLLAPYKKAKTLERQVYELNKIQDKLPEKLKAEYKKKLEDTKKALDEQVKSAITEFQNVQPTNEKMTDLQDTKYVVYESVENNESMMDTFVKHPIKTGMLNGKKYMVMETTNDDYWKDFMVEGQRVRTISKDAKNNTRTIIFPYVEGKTLYDAIVKVHVKTIDYDGQYHVRIVDKEAFTKANTDKSNKKEQQDNSAKKEATPATPSKPTPSPVEKESQKQDSQKDDNKQLPSVEKENDASSESGKDKTPATKPTKGEVESSSTTPTKVVSTTQNVAKPTTASSKTTKDVVQTSAGSSEAKDSAPLQKANIKNTNDGHTQSQNNKNTQENKAKSLPQTGEESNKDMTLPLMALLALSSIVAFVLPRKRKN.

The first 40 residues, 1–40, serve as a signal peptide directing secretion; the sequence is MNKQQKEFKSFYSIRKSSLGVASVAISTLLLLMSNGEAQA. The short motif at 12–23 is the YSIRK-G/S signaling motif element; it reads YSIRKSSLGVAS. The segment covering 38-53 has biased composition (low complexity); the sequence is AQAAAEETGGTNTEAQ. A disordered region spans residues 38–113; that stretch reads AQAAAEETGG…APKETKAVKP (76 aa). The segment covering 84-110 has biased composition (basic and acidic residues); sequence KEVEAPTSETKEAKEVKEVKAPKETKA. NEAT domains are found at residues 144 to 269 and 341 to 458; these read SAPN…KFKT and KMTD…TKAN. Heme contacts are provided by Met-362 and Tyr-440. Basic and acidic residues-rich tracts occupy residues 458-476 and 489-534; these read NTDK…KKEA and VEKE…KGEV. Positions 458–619 are disordered; the sequence is NTDKSNKKEQ…LPQTGEESNK (162 aa). Low complexity predominate over residues 535 to 560; the sequence is ESSSTTPTKVVSTTQNVAKPTTASSK. The segment covering 585 to 615 has biased composition (polar residues); the sequence is NIKNTNDGHTQSQNNKNTQENKAKSLPQTGE. Positions 610-614 match the LPXTG sorting signal motif; sequence LPQTG. Thr-613 carries the post-translational modification Pentaglycyl murein peptidoglycan amidated threonine. A propeptide spans 614 to 645 (removed by sortase); it reads GEESNKDMTLPLMALLALSSIVAFVLPRKRKN.

This sequence belongs to the IsdB family. As to quaternary structure, interacts with host HBA; this interaction allows heme extraction as iron source. Interacts with IsdA.

It is found in the secreted. Its subcellular location is the cell wall. In terms of biological role, cell wall-anchored surface receptor that extracts heme from oxidized metHb to enable growth on hemoglobin as a sole iron source. Rapidly extracts heme from hemoglobin and transfers it to IsdA or IsdC, which then relays it to the membrane transporter/IsdEF for internalization. Also promotes resistance to hydrogen peroxide and killing by neutrophils. This Staphylococcus aureus (strain Mu3 / ATCC 700698) protein is Iron-regulated surface determinant protein B (isdB).